The chain runs to 211 residues: Protein-methionine-sulfoxide reductase heme-binding subunit MsrQ (211 aa).

Helical transmembrane passes span 10–30, 82–102, 116–136, and 153–173; these read WLKV…VWAI, LWCF…ELGV, PYLT…FTST, and FVYL…KIIS.

This sequence belongs to the MsrQ family. As to quaternary structure, heterodimer of a catalytic subunit (MsrP) and a heme-binding subunit (MsrQ). FMN serves as cofactor. It depends on heme b as a cofactor.

It is found in the cell inner membrane. In terms of biological role, part of the MsrPQ system that repairs oxidized periplasmic proteins containing methionine sulfoxide residues (Met-O), using respiratory chain electrons. Thus protects these proteins from oxidative-stress damage caused by reactive species of oxygen and chlorine generated by the host defense mechanisms. MsrPQ is essential for the maintenance of envelope integrity under bleach stress, rescuing a wide series of structurally unrelated periplasmic proteins from methionine oxidation, including the primary periplasmic chaperone SurA and the lipoprotein Pal. MsrQ provides electrons for reduction to the reductase catalytic subunit MsrP, using the quinone pool of the respiratory chain. This is Protein-methionine-sulfoxide reductase heme-binding subunit MsrQ from Shigella dysenteriae serotype 1 (strain Sd197).